Here is a 198-residue protein sequence, read N- to C-terminus: Proteasome subunit beta type-2 (198 aa).

The protein belongs to the peptidase T1B family. In terms of assembly, the 26S proteasome consists of a 20S proteasome core and two 19S regulatory subunits. The 20S proteasome core is composed of 28 subunits that are arranged in four stacked rings, resulting in a barrel-shaped structure. The two end rings are each formed by seven alpha subunits, and the two central rings are each formed by seven beta subunits. The catalytic chamber with the active sites is on the inside of the barrel.

The protein localises to the cytoplasm. The protein resides in the nucleus. Non-catalytic component of the proteasome, a multicatalytic proteinase complex which is characterized by its ability to cleave peptides with Arg, Phe, Tyr, Leu, and Glu adjacent to the leaving group at neutral or slightly basic pH. The proteasome has an ATP-dependent proteolytic activity. The polypeptide is Proteasome subunit beta type-2 (psmB2) (Dictyostelium discoideum (Social amoeba)).